We begin with the raw amino-acid sequence, 473 residues long: Siroheme synthase (473 aa).

The precorrin-2 dehydrogenase /sirohydrochlorin ferrochelatase stretch occupies residues 1-222 (MNTQPHHSSP…GDESRADARL (222 aa)). NAD(+) contacts are provided by residues 37-38 (EI) and 58-59 (EK). Positions 233–473 (GEVWLVGAGP…QVVRHRVVSP (241 aa)) are uroporphyrinogen-III C-methyltransferase. P242 contributes to the S-adenosyl-L-methionine binding site. D265 (proton acceptor) is an active-site residue. The active-site Proton donor is the K287. Residues 318–320 (GGD), I323, 348–349 (SA), M401, and G430 contribute to the S-adenosyl-L-methionine site.

It in the N-terminal section; belongs to the precorrin-2 dehydrogenase / sirohydrochlorin ferrochelatase family. The protein in the C-terminal section; belongs to the precorrin methyltransferase family.

It carries out the reaction uroporphyrinogen III + 2 S-adenosyl-L-methionine = precorrin-2 + 2 S-adenosyl-L-homocysteine + H(+). The catalysed reaction is precorrin-2 + NAD(+) = sirohydrochlorin + NADH + 2 H(+). It catalyses the reaction siroheme + 2 H(+) = sirohydrochlorin + Fe(2+). The protein operates within cofactor biosynthesis; adenosylcobalamin biosynthesis; precorrin-2 from uroporphyrinogen III: step 1/1. It functions in the pathway cofactor biosynthesis; adenosylcobalamin biosynthesis; sirohydrochlorin from precorrin-2: step 1/1. It participates in porphyrin-containing compound metabolism; siroheme biosynthesis; precorrin-2 from uroporphyrinogen III: step 1/1. Its pathway is porphyrin-containing compound metabolism; siroheme biosynthesis; siroheme from sirohydrochlorin: step 1/1. The protein operates within porphyrin-containing compound metabolism; siroheme biosynthesis; sirohydrochlorin from precorrin-2: step 1/1. In terms of biological role, multifunctional enzyme that catalyzes the SAM-dependent methylations of uroporphyrinogen III at position C-2 and C-7 to form precorrin-2 via precorrin-1. Then it catalyzes the NAD-dependent ring dehydrogenation of precorrin-2 to yield sirohydrochlorin. Finally, it catalyzes the ferrochelation of sirohydrochlorin to yield siroheme. The sequence is that of Siroheme synthase from Gluconobacter oxydans (strain 621H) (Gluconobacter suboxydans).